Here is a 355-residue protein sequence, read N- to C-terminus: Uroporphyrinogen decarboxylase (355 aa).

Substrate contacts are provided by residues 27 to 31, D77, Y154, T209, and H327; that span reads RQAGR.

The protein belongs to the uroporphyrinogen decarboxylase family. In terms of assembly, homodimer.

Its subcellular location is the cytoplasm. The catalysed reaction is uroporphyrinogen III + 4 H(+) = coproporphyrinogen III + 4 CO2. Its pathway is porphyrin-containing compound metabolism; protoporphyrin-IX biosynthesis; coproporphyrinogen-III from 5-aminolevulinate: step 4/4. Its function is as follows. Catalyzes the decarboxylation of four acetate groups of uroporphyrinogen-III to yield coproporphyrinogen-III. In Yersinia pestis bv. Antiqua (strain Antiqua), this protein is Uroporphyrinogen decarboxylase.